Here is a 185-residue protein sequence, read N- to C-terminus: Large ribosomal subunit protein uL5 (185 aa).

The protein belongs to the universal ribosomal protein uL5 family. In terms of assembly, part of the 50S ribosomal subunit; part of the 5S rRNA/L5/L18/L25 subcomplex. Contacts the 5S rRNA and the P site tRNA. Forms a bridge to the 30S subunit in the 70S ribosome.

Its function is as follows. This is one of the proteins that bind and probably mediate the attachment of the 5S RNA into the large ribosomal subunit, where it forms part of the central protuberance. In the 70S ribosome it contacts protein S13 of the 30S subunit (bridge B1b), connecting the 2 subunits; this bridge is implicated in subunit movement. Contacts the P site tRNA; the 5S rRNA and some of its associated proteins might help stabilize positioning of ribosome-bound tRNAs. This chain is Large ribosomal subunit protein uL5, found in Nitrobacter winogradskyi (strain ATCC 25391 / DSM 10237 / CIP 104748 / NCIMB 11846 / Nb-255).